We begin with the raw amino-acid sequence, 383 residues long: Succinyl-diaminopimelate desuccinylase (383 aa).

His79 is a Zn(2+) binding site. Asp81 is an active-site residue. Zn(2+) is bound at residue Asp110. Glu141 functions as the Proton acceptor in the catalytic mechanism. The Zn(2+) site is built by Glu142, Glu170, and His355.

The protein belongs to the peptidase M20A family. DapE subfamily. In terms of assembly, homodimer. Zn(2+) serves as cofactor. It depends on Co(2+) as a cofactor.

It carries out the reaction N-succinyl-(2S,6S)-2,6-diaminopimelate + H2O = (2S,6S)-2,6-diaminopimelate + succinate. It functions in the pathway amino-acid biosynthesis; L-lysine biosynthesis via DAP pathway; LL-2,6-diaminopimelate from (S)-tetrahydrodipicolinate (succinylase route): step 3/3. Its function is as follows. Catalyzes the hydrolysis of N-succinyl-L,L-diaminopimelic acid (SDAP), forming succinate and LL-2,6-diaminopimelate (DAP), an intermediate involved in the bacterial biosynthesis of lysine and meso-diaminopimelic acid, an essential component of bacterial cell walls. In Helicobacter pylori (strain HPAG1), this protein is Succinyl-diaminopimelate desuccinylase.